The sequence spans 63 residues: Conotoxin Lt11.1 (63 aa).

The first 23 residues, 1-23, serve as a signal peptide directing secretion; the sequence is MMFRLTSVLLVIVLLNLVVLTNA. 4 cysteine pairs are disulfide-bonded: cysteine 24/cysteine 34, cysteine 28/cysteine 39, cysteine 33/cysteine 42, and cysteine 38/cysteine 47. The propeptide occupies 53–63; sequence ALLQRLLGHQR.

The protein belongs to the conotoxin I2 superfamily. In terms of tissue distribution, expressed by the venom duct.

Its subcellular location is the secreted. The protein is Conotoxin Lt11.1 of Conus litteratus (Lettered cone).